A 308-amino-acid chain; its full sequence is tRNA pseudouridine synthase B (308 aa).

Asp47 (nucleophile) is an active-site residue.

This sequence belongs to the pseudouridine synthase TruB family. Type 1 subfamily.

It carries out the reaction uridine(55) in tRNA = pseudouridine(55) in tRNA. Functionally, responsible for synthesis of pseudouridine from uracil-55 in the psi GC loop of transfer RNAs. The protein is tRNA pseudouridine synthase B of Xanthomonas axonopodis pv. citri (strain 306).